We begin with the raw amino-acid sequence, 391 residues long: Phosphoglycerate kinase (391 aa).

Substrate contacts are provided by residues 21–23 (DLN), arginine 36, 59–62 (HLGR), arginine 113, and arginine 146. Residues lysine 197, glutamate 319, and 345–348 (GGDT) each bind ATP.

It belongs to the phosphoglycerate kinase family. Monomer.

It localises to the cytoplasm. The enzyme catalyses (2R)-3-phosphoglycerate + ATP = (2R)-3-phospho-glyceroyl phosphate + ADP. It functions in the pathway carbohydrate degradation; glycolysis; pyruvate from D-glyceraldehyde 3-phosphate: step 2/5. The protein is Phosphoglycerate kinase of Pseudoalteromonas atlantica (strain T6c / ATCC BAA-1087).